A 73-amino-acid polypeptide reads, in one-letter code: Ubiquitin-like protein 5 (73 aa).

Residues 1–73 enclose the Ubiquitin-like domain; sequence MIEITCNDRL…DGMNLELYYQ (73 aa).

It is found in the cytoplasm. In Drosophila melanogaster (Fruit fly), this protein is Ubiquitin-like protein 5 (ubl).